We begin with the raw amino-acid sequence, 591 residues long: NADH-quinone oxidoreductase subunit C/D (591 aa).

Positions 1 to 182 (MVTVVENIDP…TPYFLNTAKQ (182 aa)) are NADH dehydrogenase I subunit C. The interval 206–591 (DFMFLNIGPN…IDVVMADCDR (386 aa)) is NADH dehydrogenase I subunit D.

In the N-terminal section; belongs to the complex I 30 kDa subunit family. It in the C-terminal section; belongs to the complex I 49 kDa subunit family. In terms of assembly, NDH-1 is composed of 13 different subunits. Subunits NuoB, CD, E, F, and G constitute the peripheral sector of the complex.

Its subcellular location is the cell inner membrane. It catalyses the reaction a quinone + NADH + 5 H(+)(in) = a quinol + NAD(+) + 4 H(+)(out). Its function is as follows. NDH-1 shuttles electrons from NADH, via FMN and iron-sulfur (Fe-S) centers, to quinones in the respiratory chain. The immediate electron acceptor for the enzyme in this species is believed to be ubiquinone. Couples the redox reaction to proton translocation (for every two electrons transferred, four hydrogen ions are translocated across the cytoplasmic membrane), and thus conserves the redox energy in a proton gradient. This Psychrobacter arcticus (strain DSM 17307 / VKM B-2377 / 273-4) protein is NADH-quinone oxidoreductase subunit C/D.